The following is a 428-amino-acid chain: Glutamate-1-semialdehyde 2,1-aminomutase (428 aa).

An N6-(pyridoxal phosphate)lysine modification is found at lysine 267.

This sequence belongs to the class-III pyridoxal-phosphate-dependent aminotransferase family. HemL subfamily. As to quaternary structure, homodimer. Pyridoxal 5'-phosphate is required as a cofactor.

Its subcellular location is the cytoplasm. It catalyses the reaction (S)-4-amino-5-oxopentanoate = 5-aminolevulinate. Its pathway is porphyrin-containing compound metabolism; protoporphyrin-IX biosynthesis; 5-aminolevulinate from L-glutamyl-tRNA(Glu): step 2/2. The protein is Glutamate-1-semialdehyde 2,1-aminomutase of Persephonella marina (strain DSM 14350 / EX-H1).